The following is a 540-amino-acid chain: Cytokinin dehydrogenase 5 (540 aa).

Residues 1-22 form the signal peptide; it reads MNREMTSSFLLLTFAICKLIIA. The FAD-binding PCMH-type domain occupies 63-241; that stretch reads SPEEPLAVLH…TRARISLEPA (179 aa). Residues A97, G99, and G101 each contribute to the FAD site. H102 is subject to Pros-8alpha-FAD histidine. Positions 103, 107, 165, 170, 176, 180, and 231 each coordinate FAD. 2 N-linked (GlcNAc...) asparagine glycosylation sites follow: N310 and N406. Positions 479 and 517 each coordinate FAD.

This sequence belongs to the oxygen-dependent FAD-linked oxidoreductase family. The cofactor is FAD. As to expression, expressed in the developing leaf petioles and in the rib zone of the axillary shoot meristems. In roots, expressed in the vascular cylinder within the root apical meristem and only faintly detectable in the differentiated root.

Its subcellular location is the secreted. The protein localises to the extracellular space. The catalysed reaction is N(6)-dimethylallyladenine + A + H2O = 3-methyl-2-butenal + adenine + AH2. Catalyzes the oxidation of cytokinins, a family of N(6)-substituted adenine derivatives that are plant hormones, where the substituent is an isopentenyl group. In association with CKX3 regulates the activity of the reproductive meristems, flower organ size and ovule formation. This is Cytokinin dehydrogenase 5 (CKX5) from Arabidopsis thaliana (Mouse-ear cress).